The chain runs to 73 residues: Large ribosomal subunit protein uL24 (73 aa).

A compositionally biased stretch (basic and acidic residues) spans 51–65 (DDNPKGGFIHKEKPM). The disordered stretch occupies residues 51-73 (DDNPKGGFIHKEKPMHISNVKKA).

This sequence belongs to the universal ribosomal protein uL24 family. As to quaternary structure, part of the 50S ribosomal subunit.

Its function is as follows. One of two assembly initiator proteins, it binds directly to the 5'-end of the 23S rRNA, where it nucleates assembly of the 50S subunit. One of the proteins that surrounds the polypeptide exit tunnel on the outside of the subunit. This is Large ribosomal subunit protein uL24 from Helicobacter acinonychis (strain Sheeba).